The chain runs to 292 residues: Porphobilinogen deaminase (292 aa).

C236 carries the S-(dipyrrolylmethanemethyl)cysteine modification.

It belongs to the HMBS family. In terms of assembly, monomer. The cofactor is dipyrromethane.

The catalysed reaction is 4 porphobilinogen + H2O = hydroxymethylbilane + 4 NH4(+). It participates in porphyrin-containing compound metabolism; protoporphyrin-IX biosynthesis; coproporphyrinogen-III from 5-aminolevulinate: step 2/4. Functionally, tetrapolymerization of the monopyrrole PBG into the hydroxymethylbilane pre-uroporphyrinogen in several discrete steps. The polypeptide is Porphobilinogen deaminase (Wolbachia sp. subsp. Drosophila simulans (strain wRi)).